We begin with the raw amino-acid sequence, 747 residues long: Oxysterol-binding protein-related protein 11 (747 aa).

M1 is modified (N-acetylmethionine). A disordered region spans residues 1 to 50; the sequence is MQGGEPVSTMKVSESEGKLEGQATAVTPNKNSSCGGGISSSSSSRGGSAK. The residue at position 15 (S15) is a Phosphoserine. T27 bears the Phosphothreonine mark. The PH domain maps to 58-155; sequence MENVYGYLMK…WVSRLQICTQ (98 aa). A Phosphotyrosine modification is found at Y62. Residues 158 to 188 form a disordered region; it reads TEAIGKNNPPLKSRSFSLASSSNSPISQRRP. Positions 170–184 are enriched in low complexity; that stretch reads SRSFSLASSSNSPIS. Phosphoserine occurs at positions 172, 174, 177, 181, 184, and 189. The span at 689–713 shows a compositional bias: basic and acidic residues; the sequence is EIDKATEHKHTLEERQRTEERHRTE. A disordered region spans residues 689-714; it reads EIDKATEHKHTLEERQRTEERHRTET.

It belongs to the OSBP family. As to quaternary structure, heterodimer with OSBPL9. In terms of tissue distribution, present at highest levels in ovary, testis, kidney, liver, stomach, brain, and adipose tissue. Strong expression (at protein level) in epithelial cells of kidney tubules, testicular tubules, caecum, and skin. Present at low levels in subcutaneous and visceral adipose tissue (at protein level).

Its subcellular location is the late endosome membrane. It localises to the golgi apparatus. It is found in the trans-Golgi network membrane. It catalyses the reaction a 1,2-diacyl-sn-glycero-3-phospho-(1D-myo-inositol 4-phosphate)(out) + a 1,2-diacyl-sn-glycero-3-phospho-L-serine(in) = a 1,2-diacyl-sn-glycero-3-phospho-(1D-myo-inositol 4-phosphate)(in) + a 1,2-diacyl-sn-glycero-3-phospho-L-serine(out). Its function is as follows. Plays a role in regulating ADIPOQ and FABP4 levels in differentiating adipocytes and is also involved in regulation of adipocyte triglyceride storage. Weakly binds 25-hydroxycholesterol. Interacts with OSBPL9 to function as lipid transfer proteins. Together they form a heterodimer that localizes at the ER-trans-Golgi membrane contact sites, and exchanges phosphatidylserine (1,2-diacyl-sn-glycero-3-phospho-L-serine, PS) for phosphatidylinositol-4-phosphate (1,2-diacyl-sn-glycero-3-phospho-(1D-myo-inositol 4-phosphate), PI(4)P) between the two organelles, a step that is critical for sphingomyelin synthesis in the Golgi complex. In Homo sapiens (Human), this protein is Oxysterol-binding protein-related protein 11 (OSBPL11).